Here is a 559-residue protein sequence, read N- to C-terminus: Formate--tetrahydrofolate ligase (559 aa).

ATP is bound at residue 67-74 (TPAGEGKS).

This sequence belongs to the formate--tetrahydrofolate ligase family.

It carries out the reaction (6S)-5,6,7,8-tetrahydrofolate + formate + ATP = (6R)-10-formyltetrahydrofolate + ADP + phosphate. Its pathway is one-carbon metabolism; tetrahydrofolate interconversion. This chain is Formate--tetrahydrofolate ligase, found in Lactobacillus delbrueckii subsp. bulgaricus (strain ATCC BAA-365 / Lb-18).